A 241-amino-acid polypeptide reads, in one-letter code: Glucosamine-6-phosphate deaminase (241 aa).

Aspartate 67 serves as the catalytic Proton acceptor; for enolization step. Asparagine 136 functions as the For ring-opening step in the catalytic mechanism. Histidine 138 (proton acceptor; for ring-opening step) is an active-site residue. Glutamate 143 acts as the For ring-opening step in catalysis.

This sequence belongs to the glucosamine/galactosamine-6-phosphate isomerase family. NagB subfamily.

The enzyme catalyses alpha-D-glucosamine 6-phosphate + H2O = beta-D-fructose 6-phosphate + NH4(+). It functions in the pathway amino-sugar metabolism; N-acetylneuraminate degradation; D-fructose 6-phosphate from N-acetylneuraminate: step 5/5. Functionally, catalyzes the reversible isomerization-deamination of glucosamine 6-phosphate (GlcN6P) to form fructose 6-phosphate (Fru6P) and ammonium ion. The polypeptide is Glucosamine-6-phosphate deaminase (Clostridium novyi (strain NT)).